Here is a 210-residue protein sequence, read N- to C-terminus: Chaperone protein TorD (210 aa).

This sequence belongs to the TorD/DmsD family. TorD subfamily.

It is found in the cytoplasm. Involved in the biogenesis of TorA. Acts on TorA before the insertion of the molybdenum cofactor and, as a result, probably favors a conformation of the apoenzyme that is competent for acquiring the cofactor. The sequence is that of Chaperone protein TorD from Salmonella choleraesuis (strain SC-B67).